The sequence spans 95 residues: Alpha-conotoxin-like Ms20.5 (95 aa).

Positions 1–24 (MPKLAVVLLVLLILPLSYFDAAGG) are cleaved as a signal peptide. Positions 25–45 (QAAEGDRRGNGLARYLQRGGR) are excised as a propeptide. E50 carries the post-translational modification 4-carboxyglutamate. P56 bears the 4-hydroxyproline mark. 4 disulfide bridges follow: C64–C73, C69–C81, C74–C91, and C79–C93.

This sequence belongs to the conotoxin D superfamily. Hetero-, homo- or pseudo-homodimer (identical sequence, different post-translational modifications). Heterodimer of [carboxy'Glu-49', hydroxy'Pro-55']Ms20.3 and [carboxyGlu-50, hydroxyPro-56]Ms20.5 may exist. As to expression, expressed by the venom duct.

It is found in the secreted. Alpha-conotoxins act on postsynaptic membranes, they bind to the nicotinic acetylcholine receptors (nAChR) and thus inhibit them. Through its two C-terminal domains, this homodimeric protein would bind to two nAChR allosteric sites, located outside the nAChR C-loop of the principal binding face and at the adjacent binding interface in a clockwise direction. This toxin specifically blocks mammalian neuronal nAChR of the alpha-7/CHRNA7, alpha-3-beta-2/CHRNA3-CHRNB2 and alpha-4-beta-2/CHRNA4-CHRNB2 subtypes. The protein is Alpha-conotoxin-like Ms20.5 of Conus mustelinus (Weasel cone).